The following is a 513-amino-acid chain: ETS translocation variant 3 (513 aa).

The segment at residues 35–116 (IQLWHFILEL…KGKRFTYKFN (82 aa)) is a DNA-binding region (ETS). The interval 138 to 202 (QSAPPVPTAS…DLEDGSASDW (65 aa)) is disordered. Residues serine 139, serine 159, and serine 315 each carry the phosphoserine modification. The interval 333 to 513 (QMHPEEPSQF…ATTATAAADA (181 aa)) is disordered. 3 stretches are compositionally biased toward basic and acidic residues: residues 357–366 (ERVESREEAV), 380–392 (IKVEPATEKDPDS), and 399–419 (GKEEQTQEVDSMRSRTIEEGK). Residue lysine 381 forms a Glycyl lysine isopeptide (Lys-Gly) (interchain with G-Cter in SUMO2) linkage. The residue at position 388 (lysine 388) is an N6-acetyllysine; alternate. Lysine 388 participates in a covalent cross-link: Glycyl lysine isopeptide (Lys-Gly) (interchain with G-Cter in SUMO2); alternate. Residues 430-439 (WPSVSISTPS) are compositionally biased toward polar residues. The segment covering 441–450 (EPLEGTEDSE) has biased composition (acidic residues). 2 stretches are compositionally biased toward basic and acidic residues: residues 451–466 (DRSVREPGVPEKKEDA) and 477–489 (RWNDDPEARELNK). The segment covering 504 to 513 (ATTATAAADA) has biased composition (low complexity).

Belongs to the ETS family.

It localises to the nucleus. In terms of biological role, transcriptional repressor that contribute to growth arrest during terminal macrophage differentiation by repressing target genes involved in Ras-dependent proliferation. Represses MMP1 promoter activity. This is ETS translocation variant 3 (Etv3) from Mus musculus (Mouse).